We begin with the raw amino-acid sequence, 477 residues long: Mitochondrial adenyl nucleotide antiporter SLC25A24 (477 aa).

Positions 1–173 (MLRWLRGFVL…RFWKHSTGID (173 aa)) are regulatory N-terminal domain. The Mitochondrial intermembrane portion of the chain corresponds to 1–197 (MLRWLRGFVL…EKKSGQWWRQ (197 aa)). 4 EF-hand domains span residues 19 to 54 (EPPTRYETLFQKLDRNGDGVVDISELQEGLKSLGIP), 61 to 85 (EKIFTTGDVNKDGKLDFEEFMKYLK), 86 to 121 (DHEKKMKLAFKSLDKNNDGKIEASEIVQSLQILGLT), and 122 to 157 (ISEQQAELILQSIDADGTMTVDWNEWRDYFLFNPVT). The Ca(2+) site is built by D32, N34, D36, V38, E43, D68, N70, D72, K74, E79, D99, N101, D103, K105, E110, D135, D137, T139, T141, and E146. Residues 159-168 (IEEIIRFWKH) are linker region. The C-terminal transmembrane transporter domain stretch occupies residues 174-477 (IGDSLTIPDE…MKQTLGVTQK (304 aa)). Solcar repeat units lie at residues 192–278 (GQWW…YKKL), 286–371 (IGTF…LKSH), and 383–471 (PGVM…MKQT). A helical transmembrane segment spans residues 198–215 (LLAGGVAGAVSRTSTAPL). Over 216–252 (DRLKVMMQVHGSKSAKMNIYGGFQQMVKEGGIRSLWR) the chain is Mitochondrial matrix. Residues 253-272 (GNGTNVIKIAPETAVKFWAY) traverse the membrane as a helical segment. The Mitochondrial intermembrane segment spans residues 273–295 (EQYKKLLTEEGQKIGTFERFVSG). Residues 296-309 (SMAGATAQTFIYPM) traverse the membrane as a helical segment. Residues 310-345 (EVLKTRLAVGKTGQYSGMFDCAKKILKYEGMGAFYK) lie on the Mitochondrial matrix side of the membrane. K320 carries the post-translational modification N6-acetyllysine; alternate. K320 is subject to N6-succinyllysine; alternate. K336 carries the N6-acetyllysine modification. Residues 346-365 (GYVPNLLGIIPYAGIDLAVY) form a helical membrane-spanning segment. The Mitochondrial intermembrane portion of the chain corresponds to 366–388 (ELLKSHWLDNFAKDSVNPGVMVL). A helical transmembrane segment spans residues 389 to 406 (LGCGALSSTCGQLASYPL). The Mitochondrial matrix portion of the chain corresponds to 407–445 (ALVRTRMQAQAMIEKSPQLNMVGLFRRILSKEGLPGLYR). Residue K437 is modified to N6-acetyllysine; alternate. K437 is modified (N6-succinyllysine; alternate). Residues 446–465 (GITPNFMKVLPAVGISYVVY) traverse the membrane as a helical segment. Topologically, residues 466–477 (ENMKQTLGVTQK) are mitochondrial intermembrane.

It belongs to the mitochondrial carrier (TC 2.A.29) family. As to quaternary structure, monomer.

It is found in the mitochondrion inner membrane. The catalysed reaction is Mg(2+)(out) + phosphate(in) + ATP(out) = Mg(2+)(in) + phosphate(out) + ATP(in). The enzyme catalyses ADP(out) + phosphate(in) + H(+)(out) = ADP(in) + phosphate(out) + H(+)(in). It carries out the reaction AMP(out) + phosphate(in) = AMP(in) + phosphate(out). It catalyses the reaction phosphate(in) + ATP(out) + 2 H(+)(out) = phosphate(out) + ATP(in) + 2 H(+)(in). The catalysed reaction is dADP(in) + ADP(out) = dADP(out) + ADP(in). The enzyme catalyses Mg(2+)(in) + ADP(out) + ATP(in) + H(+)(out) = Mg(2+)(out) + ADP(in) + ATP(out) + H(+)(in). It carries out the reaction ADP(out) + diphosphate(in) = ADP(in) + diphosphate(out). It catalyses the reaction dAMP(in) + ADP(out) + H(+)(out) = dAMP(out) + ADP(in) + H(+)(in). The catalysed reaction is 3'-AMP(in) + ADP(out) + H(+)(out) = 3'-AMP(out) + ADP(in) + H(+)(in). The enzyme catalyses dAMP(out) + phosphate(in) = dAMP(in) + phosphate(out). It carries out the reaction 3'-AMP(out) + phosphate(in) = 3'-AMP(in) + phosphate(out). It catalyses the reaction dADP(out) + phosphate(in) + H(+)(out) = dADP(in) + phosphate(out) + H(+)(in). Its activity is regulated as follows. Activated by an increase in cytosolic calcium levels that induce a conformational change of the N-terminal regulatory domain, uncapping the channel and allowing transport. Inhibited by bathophenanthroline, mersalyl, p-hydroxymercuribenzoate, bromcresol purple and tannic acid. Its function is as follows. Electroneutral antiporter that mediates the transport of adenyl nucleotides through the inner mitochondrial membrane. Originally identified as an ATP-magnesium/inorganic phosphate antiporter, it also acts as a broad specificity adenyl nucleotide antiporter. By regulating the mitochondrial matrix adenyl nucleotide pool could adapt to changing cellular energetic demands and indirectly regulate adenyl nucleotide-dependent metabolic pathways. In vitro, a low activity is also observed with guanyl and pyrimidine nucleotides. May play a role in protecting cells against oxidative stress-induced cell death, by buffering calcium levels in the mitochondrial matrix through the formation of calcium-phosphate precipitates. The protein is Mitochondrial adenyl nucleotide antiporter SLC25A24 (SLC25A24) of Bos taurus (Bovine).